The sequence spans 245 residues: Vacuolar iron transporter (245 aa).

Topologically, residues 1-28 (MGEVGESEKYLLNRHKEHHFTAGETVRD) are cytoplasmic. A helical transmembrane segment spans residues 29-49 (IIIGFSDGLTVPFALAAGLSG). Residues 50–55 (ANASSS) are Vacuolar-facing. Residues 56–76 (IILTAGIAEVAAGAISMGLGG) traverse the membrane as a helical segment. Residues 77–162 (YLAAKSEADH…PRRALQSALT (86 aa)) are Cytoplasmic-facing. Fe cation contacts are provided by glutamate 94, glutamate 97, glutamate 105, glutamate 108, methionine 141, and glutamate 145. The chain crosses the membrane as a helical span at residues 163–183 (IAISYVLSGLIPLLPYMFIPI). Residues 184-186 (AQK) lie on the Vacuolar side of the membrane. A helical transmembrane segment spans residues 187 to 207 (AVVSSVIVTIFALLIFGFAKG). Topologically, residues 208-214 (YFTGNKP) are cytoplasmic. The helical transmembrane segment at 215–235 (VWSALQTALIGAIASAAAFGM) threads the bilayer. The Vacuolar portion of the chain corresponds to 236–245 (AKGCASSVFE).

Belongs to the CCC1 family. As to expression, expressed in petal tissues, but not in other parts of the plant, such as leaves, roots, sepals and stems.

The protein localises to the vacuole membrane. It catalyses the reaction Fe(2+)(in) = Fe(2+)(out). In terms of biological role, vacuolar iron transporter involved in the transfer of iron ions from the cytosol to the vacuole for intracellular iron storage. Plays an essential role in the development of blue coloration in cornflower petals. The sequence is that of Vacuolar iron transporter from Centaurea cyanus (Garden cornflower).